We begin with the raw amino-acid sequence, 429 residues long: Ribosomal RNA small subunit methyltransferase B (429 aa).

S-adenosyl-L-methionine is bound by residues 254 to 260 (CAAPGGK), Asp277, Asp303, and Asp322. The Nucleophile role is filled by Cys375.

Belongs to the class I-like SAM-binding methyltransferase superfamily. RsmB/NOP family.

Its subcellular location is the cytoplasm. The enzyme catalyses cytidine(967) in 16S rRNA + S-adenosyl-L-methionine = 5-methylcytidine(967) in 16S rRNA + S-adenosyl-L-homocysteine + H(+). Functionally, specifically methylates the cytosine at position 967 (m5C967) of 16S rRNA. This chain is Ribosomal RNA small subunit methyltransferase B, found in Escherichia coli O6:H1 (strain CFT073 / ATCC 700928 / UPEC).